The chain runs to 363 residues: Small ribosomal subunit biogenesis GTPase RsgA (363 aa).

In terms of domain architecture, CP-type G spans 112 to 268 (HQQVIAANID…LIDTPGMREL (157 aa)). GTP is bound by residues 157-160 (TKAD) and 210-218 (GSSGAGKST). Zn(2+) is bound by residues C291, C296, H298, and C304. The interval 340-363 (RVAQNNRGKGSGKRPASVDRPGRR) is disordered.

The protein belongs to the TRAFAC class YlqF/YawG GTPase family. RsgA subfamily. Monomer. Associates with 30S ribosomal subunit, binds 16S rRNA. The cofactor is Zn(2+).

The protein resides in the cytoplasm. Its function is as follows. One of several proteins that assist in the late maturation steps of the functional core of the 30S ribosomal subunit. Helps release RbfA from mature subunits. May play a role in the assembly of ribosomal proteins into the subunit. Circularly permuted GTPase that catalyzes slow GTP hydrolysis, GTPase activity is stimulated by the 30S ribosomal subunit. The chain is Small ribosomal subunit biogenesis GTPase RsgA from Xanthomonas campestris pv. campestris (strain 8004).